Consider the following 604-residue polypeptide: Uptake hydrogenase large subunit (604 aa).

Ni(2+) contacts are provided by C76, C79, C583, and C586.

Belongs to the [NiFe]/[NiFeSe] hydrogenase large subunit family. As to quaternary structure, heterodimer of a large and a small subunit. Ni(2+) serves as cofactor.

It localises to the cell membrane. It catalyses the reaction H2 + A = AH2. In terms of biological role, this enzyme recycles the H(2) produced by nitrogenase to increase the production of ATP and to protect nitrogenase against inhibition or damage by O(2) under carbon- or phosphate-limited conditions. In Afipia carboxidovorans (strain ATCC 49405 / DSM 1227 / KCTC 32145 / OM5) (Oligotropha carboxidovorans), this protein is Uptake hydrogenase large subunit (hoxL).